The following is an 845-amino-acid chain: Protein SEY1 (845 aa).

A coiled-coil region spans residues 1 to 29 (MELNVDSAKQLLAEHEQELQSAHDAHSIL). The Cytoplasmic portion of the chain corresponds to 1-749 (MELNVDSAKQ…KRATVSSIAQ (749 aa)). The region spanning 112-334 (GFGYDLCAVL…DPNFVFKTEY (223 aa)) is the GB1/RHD3-type G domain. 122–129 (GSQSTGKS) lines the GTP pocket. The helical transmembrane segment at 750 to 770 (VPLWMYGVMLVLGWNELMAIL) threads the bilayer. The Lumenal segment spans residues 771 to 773 (SSP). A helical transmembrane segment spans residues 774-794 (VYFAFLLVLIASAYIVWRLNL). The Cytoplasmic portion of the chain corresponds to 795 to 845 (SGPLISVLRAVANEVHRLADAQLRTHFSQPLREPRPPAESRPAEQIELEPN). A disordered region spans residues 823 to 845 (QPLREPRPPAESRPAEQIELEPN). A compositionally biased stretch (basic and acidic residues) spans 826–838 (REPRPPAESRPAE).

It belongs to the TRAFAC class dynamin-like GTPase superfamily. GB1/RHD3 GTPase family. RHD3 subfamily.

The protein resides in the endoplasmic reticulum membrane. Cooperates with the reticulon proteins and tubule-shaping DP1 family proteins to generate and maintain the structure of the tubular endoplasmic reticulum network. Has GTPase activity, which is required for its function in ER organization. The sequence is that of Protein SEY1 from Mycosarcoma maydis (Corn smut fungus).